A 130-amino-acid polypeptide reads, in one-letter code: Large ribosomal subunit protein bL19 (130 aa).

The protein belongs to the bacterial ribosomal protein bL19 family.

Its function is as follows. This protein is located at the 30S-50S ribosomal subunit interface and may play a role in the structure and function of the aminoacyl-tRNA binding site. The polypeptide is Large ribosomal subunit protein bL19 (Mycoplasma mycoides subsp. mycoides SC (strain CCUG 32753 / NCTC 10114 / PG1)).